Here is a 77-residue protein sequence, read N- to C-terminus: UPF0213 protein VNG_2274C (77 aa).

Residues 1-75 (MHHVYVIECS…KQLSRAQKEA (75 aa)) form the GIY-YIG domain.

The protein belongs to the UPF0213 family.

In Halobacterium salinarum (strain ATCC 700922 / JCM 11081 / NRC-1) (Halobacterium halobium), this protein is UPF0213 protein VNG_2274C.